Consider the following 373-residue polypeptide: Caspase-4 (373 aa).

The tract at residues Met1–Asp59 is required for LPS-binding. Residues Met1–Asp80 constitute a propeptide that is removed on maturation. The CARD domain maps to Met1–Glu91. Ser83 is modified (phosphoserine). Catalysis depends on residues His206 and Cys254. A propeptide spanning residues Ser267–Asp285 is cleaved from the precursor. Arg310 carries the post-translational modification (Microbial infection) ADP-riboxanated arginine.

This sequence belongs to the peptidase C14A family. In terms of assembly, heterotetramer that consists of two anti-parallel arranged heterodimers, each one formed by a 20 kDa (Caspase-4 subunit p20) and a 10 kDa (Caspase-4 subunit p10) subunit. Upon direct LPS-binding, forms large homooligomers, resulting in its activation. These oligomers are often referred to as 'non-canonical inflammasomes'. In its precursor form, interacts with TMEM214; this interaction is required for association with the endoplasmic reticulum membrane. Interacts with CASP1. Interacts with NOD2. Interacts with Serpinb1a, Serpinb1b and Serpinb1c; these interactions regulate CASP4 activity. As to quaternary structure, heterotetramer that consists of two anti-parallel arranged heterodimers, each one formed by a 20 kDa (Caspase-4 subunit p20) and a 10 kDa (Caspase-4 subunit p10) subunit. Post-translationally, in response to activation signals, undergoes autoproteolytic cleavage and activation. In terms of processing, (Microbial infection) ADP-riboxanation by S.flexneri OspC3 blocks CASP4 autoprocessing, preventing CASP4 activation and ability to recognize and cleave GSDMD, thereby thwarting the inflammasome/pyroptosis-mediated defense. In terms of tissue distribution, widely expressed, including in thymus, lung and spleen (at protein level). Very low levels, if any, in the brain.

It is found in the cytoplasm. Its subcellular location is the cytosol. The protein localises to the endoplasmic reticulum membrane. The protein resides in the mitochondrion. It localises to the inflammasome. It is found in the secreted. It carries out the reaction Strict requirement for Asp at the P1 position and has a preferred cleavage sequence of (Ile/Leu/Val/Phe)-Gly-His-Asp-|-.. With respect to regulation, activated by homooligomerization induced by direct binding to cytosolic LPS, in a TLR4-independent manner. In addition to LPS, CASP4/CASP11 may also be activated by oxidized phospholipid 1-palmitoyl-2-arachidonoyl- sn-glycero-3-phosphorylcholine, an oxidized phospholipid (oxPAPC), in dendritic cells, promoting adaptive immunity. The role of oxPAPC is however unclear and another report suggests that oxPAPC competes with LPS-binding and inhibits the non-canonical inflammasome in macrophages. Its function is as follows. Inflammatory caspase that acts as the effector of the non-canonical inflammasome by mediating lipopolysaccharide (LPS)-induced pyroptosis. Also indirectly activates the NLRP3 and NLRP6 inflammasomes. Acts as a thiol protease that cleaves a tetrapeptide after an Asp residue at position P1: catalyzes cleavage of CGAS and GSDMD. In contrast to its human ortholog, does not cleave IL18. Effector of the non-canonical inflammasome independently of NLRP3 inflammasome and CASP1: the non-canonical inflammasome promotes pyroptosis through GSDMD cleavage without involving secretion of cytokine IL1B and IL18. In the non-canonical inflammasome, CASP4/CASP11 is activated by direct binding to the lipid A moiety of LPS without the need of an upstream sensor. LPS-binding promotes CASP4/CASP11 activation and CASP4/CASP11-mediated cleavage of GSDMD, followed by pyroptosis of infected cells and their extrusion into the gut lumen. Also indirectly promotes secretion of mature cytokines (IL1A, IL18 and HMGB1) downstream of GSDMD-mediated pyroptosis via activation of the NLRP3 and NLRP6 inflammasomes. Involved in NLRP3-dependent CASP1 activation and IL1B and IL18 secretion in response to non-canonical activators, such as UVB radiation or cholera enterotoxin. Involved in NLRP6 inflammasome-dependent activation in response to lipoteichoic acid (LTA), a cell-wall component of Gram-positive bacteria, which leads to CASP1 activation and IL1B and IL18 secretion. Involved in LPS-induced IL6 secretion; this activity may not require caspase enzymatic activity. The non-canonical inflammasome is required for innate immunity to cytosolic, but not vacuolar, bacteria. Plays a crucial role in the restriction of S.typhimurium replication in colonic epithelial cells during infection. Activation of the non-canonical inflammasome in brain endothelial cells can lead to excessive pyroptosis, leading to blood-brain barrier breakdown. Pyroptosis limits bacterial replication, while cytokine secretion promotes the recruitment and activation of immune cells and triggers mucosal inflammation. May also act as an activator of adaptive immunity in dendritic cells, following activation by oxidized phospholipid 1-palmitoyl-2-arachidonoyl- sn-glycero-3-phosphorylcholine, an oxidized phospholipid (oxPAPC). Cleavage of GSDMD is not strictly dependent on the consensus cleavage site but depends on an exosite interface on CASP4/CASP11 that recognizes and binds the Gasdermin-D, C-terminal (GSDMD-CT) part. In contrast, it does not directly process IL1B. During non-canonical inflammasome activation, cuts CGAS and may play a role in the regulation of antiviral innate immune activation. This Mus musculus (Mouse) protein is Caspase-4.